We begin with the raw amino-acid sequence, 336 residues long: Holliday junction branch migration complex subunit RuvB (336 aa).

The interval Met4 to Tyr185 is large ATPase domain (RuvB-L). ATP contacts are provided by residues Leu24, Arg25, Gly66, Lys69, Thr70, Thr71, Glu132–Phe134, Arg175, Tyr185, and Arg222. Residue Thr70 coordinates Mg(2+). A small ATPAse domain (RuvB-S) region spans residues Thr186–Gln256. The segment at Lys259 to Val336 is head domain (RuvB-H). DNA contacts are provided by Arg314 and Arg319.

The protein belongs to the RuvB family. As to quaternary structure, homohexamer. Forms an RuvA(8)-RuvB(12)-Holliday junction (HJ) complex. HJ DNA is sandwiched between 2 RuvA tetramers; dsDNA enters through RuvA and exits via RuvB. An RuvB hexamer assembles on each DNA strand where it exits the tetramer. Each RuvB hexamer is contacted by two RuvA subunits (via domain III) on 2 adjacent RuvB subunits; this complex drives branch migration. In the full resolvosome a probable DNA-RuvA(4)-RuvB(12)-RuvC(2) complex forms which resolves the HJ.

It localises to the cytoplasm. It carries out the reaction ATP + H2O = ADP + phosphate + H(+). In terms of biological role, the RuvA-RuvB-RuvC complex processes Holliday junction (HJ) DNA during genetic recombination and DNA repair, while the RuvA-RuvB complex plays an important role in the rescue of blocked DNA replication forks via replication fork reversal (RFR). RuvA specifically binds to HJ cruciform DNA, conferring on it an open structure. The RuvB hexamer acts as an ATP-dependent pump, pulling dsDNA into and through the RuvAB complex. RuvB forms 2 homohexamers on either side of HJ DNA bound by 1 or 2 RuvA tetramers; 4 subunits per hexamer contact DNA at a time. Coordinated motions by a converter formed by DNA-disengaged RuvB subunits stimulates ATP hydrolysis and nucleotide exchange. Immobilization of the converter enables RuvB to convert the ATP-contained energy into a lever motion, pulling 2 nucleotides of DNA out of the RuvA tetramer per ATP hydrolyzed, thus driving DNA branch migration. The RuvB motors rotate together with the DNA substrate, which together with the progressing nucleotide cycle form the mechanistic basis for DNA recombination by continuous HJ branch migration. Branch migration allows RuvC to scan DNA until it finds its consensus sequence, where it cleaves and resolves cruciform DNA. The sequence is that of Holliday junction branch migration complex subunit RuvB from Bacillus cereus (strain ZK / E33L).